The primary structure comprises 1064 residues: MTELIPGPKGLPLIGNVLDIDPVDAVVCLGRIADTYGHIYQLKVGGSAKIFISSRELVDELSDESRFTKLVSGPLAQLRNVCHDSLFTAQSDEPAWDLAHKILMPAFGPLAIRGMFDEMHDIASQLVVKWARFGPQDTIDVSGDFTRLTLDAIALCSMSTRFNSFYKQDQHPFVSSMLEVLAESGKRAVRPPFVNDYIFRGSLKHYNTEIATMRRIAMDVLAERRANPMACQKNDLLNAMINGRDPKTGEGLSDESTINNLIVFLIAGHETTSGLLSFLFYYLLTRPDVFEKAQKEVDELVGRGPVTIEHMSKLHYIEACLRETLRLHPTAPVITFKTKPGFEKESTTIGGGKYKIDRDQGIVALLVNIQRDPKVWGDDANEFKPERMTDEKFNNLPANCWKPFGNGIRGCIGRAFAWQESLLITAMLLQNFNFQLADPDYKLQIKQTLTIKPGNFFMHAKLRDHVDPLELEGILHGGAKKGSKIDGPSSGASLATTEQELQPMTILYGSDSGTCESMAQSLARAARGRGYGATVKTLDSAVEQVPKDQPVVIVSPSYNGQPPSNATDFVKWLEALDSKALKDVKYSVYGCGNKDYTSTFHRIPKLLDAEFERCGAKRIAETGLGDVTVGDIFSDFERWQDDQLWPALGVAHMDGDADAEFDIHVDRSGRAAELEVDADEATVQSNQVLTAPGEPEKRYITLKLPEGMQYKSGDHLSVLPLNDWGVVRRVFAWAQLPWDAVVTIPKGTNTSLPTGRQISAKDLLSGYVELSQPATRKNIAKLAASSPCPFTQKSLSKLEEHFDSDIAQRRLSVLDILEEFPAIDITFGNFISMLPPMRPRQYSIASSPMADPSTATLMWTVLNSEAYSGSGRRFLGVCSTYLAGLAEGDRVHVTVKPALRLFHPPSDPESMPIIMACAGTGLAPFRGFLEERVCQMKAGRALAPAYLFVGCRDPEKDALLKDELAQWERDGVVKIYYAFSRASDQSDGCKHVQDRIWNERDLVRKGLFEGNARFFMCGGSGAGKSVEDVVKRIYKDNKGESQEKAAESWFQDLKANRYVTEIFA.

Residues 1–484 form a cytochrome P450 region; that stretch reads MTELIPGPKG…LHGGAKKGSK (484 aa). Residue Cys-411 coordinates heme. Residues 485–1064 form an NADPH-P-450 reductase region; sequence IDGPSSGASL…ANRYVTEIFA (580 aa). The region spanning 504–644 is the Flavodoxin-like domain; sequence MTILYGSDSG…DFERWQDDQL (141 aa). Residues 510–514 and 588–620 each bind FMN; these read SDSGT and VYGC…KRIA. Positions 676–905 constitute an FAD-binding FR-type domain; sequence VDADEATVQS…KPALRLFHPP (230 aa).

The protein in the N-terminal section; belongs to the cytochrome P450 family. Requires FAD as cofactor. FMN serves as cofactor. It depends on heme as a cofactor.

The catalysed reaction is ilicicolin A + NADPH + O2 + H(+) = ilicicolin A epoxide + NADP(+) + H2O. Its pathway is secondary metabolite biosynthesis; terpenoid biosynthesis. In terms of biological role, bifunctional cytochrome P450/NADPH--P450 reductase; part of the asc-1 gene cluster that mediates the biosynthesis both ascochlorin and ascofuranone, a strong inhibitor of cyanide-insensitive alternative oxidases and a promising drug candidate against African trypanosomiasis. The first step in the pathway is performed by the non-reducing polyketide synthase ascC that produces orsellinic acid by condensing acetyl-CoA with 3 malonyl-CoA units. Orsellinic acid is then prenylated by the prenyltransferase ascA to yield ilicicolinic acid B. Ilicicolinic acid B is further reduced to ilicicolin B by the reductase ascB. The halogenase ascD then chlorinates ilicicolin B to produce ilicicolin A which is converted to ilicicolin A epoxide by the cytochrome P450 monooxygenase ascE that catalyzes stereoselective epoxidation of the terminal double bond of the prenyl group. Ilicicolin A epoxide is the last common precursor for the biosynthesis of ascofuranone and ascochlorin. The terpene cyclase ascF produces a monocyclic terpene, and the cyclization reaction is proposed to be initiated by protonation of the terminal epoxide of ilicicolin A epoxide to generate a monocyclic tertiarycation, which is followed by a series of hydride and methyl shifts with abstraction of proton, leading to the formation of the (14S,15R,19R)-trimethylcyclohexanone ring structure of ilicicolin C, which is finally reduced to ascochlorin by the dehydrogenase ascG. On the other hand, ilicicolin A epoxide is hydroxylated by the cytochrome P450 monooxygenase ascH, and the resultant product is cyclized by the terpene cyclase ascI to ascofuranol via protonation-initiated epoxide ring opening, which facilitates the 6-endo-tet cyclization to form the tetrahy-drofuran ring. Finally, ascofuranol is oxidized into ascofuranone by ascJ. The protein is Bifunctional cytochrome P450/NADPH--P450 reductase ascE of Acremonium egyptiacum (Oospora egyptiaca).